The following is a 94-amino-acid chain: uncharacterized protein (94 aa).

The first 22 residues, 1-22 (MIMKNCLLLGALLMGFTGVAMA), serve as a signal peptide directing secretion.

This is an uncharacterized protein from Escherichia coli (strain K12).